A 309-amino-acid polypeptide reads, in one-letter code: Homoserine O-succinyltransferase (309 aa).

Cysteine 142 (acyl-thioester intermediate) is an active-site residue. Residues lysine 163 and serine 192 each contribute to the substrate site. Histidine 235 acts as the Proton acceptor in catalysis. Glutamate 237 is a catalytic residue. Substrate is bound at residue arginine 249.

Belongs to the MetA family.

The protein localises to the cytoplasm. It catalyses the reaction L-homoserine + succinyl-CoA = O-succinyl-L-homoserine + CoA. The protein operates within amino-acid biosynthesis; L-methionine biosynthesis via de novo pathway; O-succinyl-L-homoserine from L-homoserine: step 1/1. Its function is as follows. Transfers a succinyl group from succinyl-CoA to L-homoserine, forming succinyl-L-homoserine. This is Homoserine O-succinyltransferase from Erwinia tasmaniensis (strain DSM 17950 / CFBP 7177 / CIP 109463 / NCPPB 4357 / Et1/99).